We begin with the raw amino-acid sequence, 147 residues long: Peptide deformylase (147 aa).

Residues C88 and H130 each coordinate Fe cation. Residue E131 is part of the active site. Residue H134 participates in Fe cation binding.

This sequence belongs to the polypeptide deformylase family. Fe(2+) serves as cofactor.

The enzyme catalyses N-terminal N-formyl-L-methionyl-[peptide] + H2O = N-terminal L-methionyl-[peptide] + formate. Removes the formyl group from the N-terminal Met of newly synthesized proteins. Requires at least a dipeptide for an efficient rate of reaction. N-terminal L-methionine is a prerequisite for activity but the enzyme has broad specificity at other positions. The polypeptide is Peptide deformylase (Clostridium botulinum (strain Alaska E43 / Type E3)).